The sequence spans 630 residues: MSESATPHGSPGEKLRLAGLIGVLGVVYGDIGTSPLYAVQASLSYFPGNKLQESDVLGLLSLIFWALIITVTIKYVLLIMRADNEGEGGTLSLMALAQRVTQSDRTKWIIGIIGICGAGLFFGDATITPAISVLSAVEGMEVVSPGLKEFVLPIAIAVILVLFFVQRFGTARVGGAFGPIMVIWFVVIGALGLHQIFIHPNVLRALVPVYGAAFIMRHDLLAFIALGSVVLAVTGAEALYADMGHFGAKPIRVSWLFFVLPCLLLNYFGQGALVIRDPHAASNPFFFLLPHALVVPMVILATIATVIASQAVISGAYSVARQSTQLGLLPRMPIRYTNETEQGQIYVPPVNSFLFVVVVLLVLGFGSSSALASAYGIAVTGTFLSTNALAAFVYCRHFNWPLRRTVLVFGAIGLVDFAFFSSNVLKVFDGGWVPLAIGFSLITVMTTWRRGRALLHQRWQQDSLPLASFLGRLPQSRIVRVPGVAVFMTGNPEYTPSSLLHNLKHNKVLHETVVFVTVRNPGVPFVGDARRAKVEELSEGVYRVLLSFGFMESPNIPRALDLLREQGLPFNPMQISYFLGRETIVAATVPKLGFIRRAIFLFMLRNAISATEFFKIPSDRVVELGVRIAI.

12 helical membrane-spanning segments follow: residues 19-39, 59-79, 108-128, 145-165, 173-193, 220-240, 255-275, 284-304, 345-365, 374-394, 405-425, and 427-447; these read GLIG…LYAV, LLSL…VLLI, WIIG…ATIT, PGLK…LFFV, VGGA…ALGL, LLAF…EALY, WLFF…ALVI, PFFF…ATIA, IYVP…VLGF, AYGI…AFVY, TVLV…SNVL, and VFDG…VMTT.

It belongs to the HAK/KUP transporter (TC 2.A.72) family.

Its subcellular location is the cell inner membrane. The enzyme catalyses K(+)(in) + H(+)(in) = K(+)(out) + H(+)(out). Functionally, transport of potassium into the cell. Likely operates as a K(+):H(+) symporter. The polypeptide is Probable potassium transport system protein Kup (Acidiphilium cryptum (strain JF-5)).